The following is a 430-amino-acid chain: tRNA(Ile)-lysidine synthase (430 aa).

An ATP-binding site is contributed by 27-32 (SGGSDS).

The protein belongs to the tRNA(Ile)-lysidine synthase family.

It localises to the cytoplasm. The catalysed reaction is cytidine(34) in tRNA(Ile2) + L-lysine + ATP = lysidine(34) in tRNA(Ile2) + AMP + diphosphate + H(+). Functionally, ligates lysine onto the cytidine present at position 34 of the AUA codon-specific tRNA(Ile) that contains the anticodon CAU, in an ATP-dependent manner. Cytidine is converted to lysidine, thus changing the amino acid specificity of the tRNA from methionine to isoleucine. In Rickettsia felis (strain ATCC VR-1525 / URRWXCal2) (Rickettsia azadi), this protein is tRNA(Ile)-lysidine synthase.